A 277-amino-acid polypeptide reads, in one-letter code: 4-hydroxy-tetrahydrodipicolinate reductase (277 aa).

NAD(+) contacts are provided by residues 11–16 (GALGRM) and 110–112 (GTT). His-166 (proton donor/acceptor) is an active-site residue. (S)-2,3,4,5-tetrahydrodipicolinate is bound at residue His-167. Lys-170 acts as the Proton donor in catalysis. 176-177 (GT) is a (S)-2,3,4,5-tetrahydrodipicolinate binding site.

It belongs to the DapB family.

The protein resides in the cytoplasm. The catalysed reaction is (S)-2,3,4,5-tetrahydrodipicolinate + NAD(+) + H2O = (2S,4S)-4-hydroxy-2,3,4,5-tetrahydrodipicolinate + NADH + H(+). It catalyses the reaction (S)-2,3,4,5-tetrahydrodipicolinate + NADP(+) + H2O = (2S,4S)-4-hydroxy-2,3,4,5-tetrahydrodipicolinate + NADPH + H(+). The protein operates within amino-acid biosynthesis; L-lysine biosynthesis via DAP pathway; (S)-tetrahydrodipicolinate from L-aspartate: step 4/4. In terms of biological role, catalyzes the conversion of 4-hydroxy-tetrahydrodipicolinate (HTPA) to tetrahydrodipicolinate. This Synechococcus sp. (strain CC9605) protein is 4-hydroxy-tetrahydrodipicolinate reductase.